The chain runs to 636 residues: Chaperone protein DnaK (636 aa).

At Thr198 the chain carries Phosphothreonine; by autocatalysis. A disordered region spans residues 600-636; the sequence is IAQQQAQAQQGSAEAGAQSQEDDVVDAEFEEVKDDKK. Positions 601 to 618 are enriched in low complexity; that stretch reads AQQQAQAQQGSAEAGAQS. Residues 619–636 are compositionally biased toward acidic residues; sequence QEDDVVDAEFEEVKDDKK.

The protein belongs to the heat shock protein 70 family.

Its function is as follows. Acts as a chaperone. The protein is Chaperone protein DnaK of Vibrio vulnificus (strain CMCP6).